The chain runs to 255 residues: 1-(5-phosphoribosyl)-5-[(5-phosphoribosylamino)methylideneamino] imidazole-4-carboxamide isomerase (255 aa).

Aspartate 8 serves as the catalytic Proton acceptor. Residue aspartate 129 is the Proton donor of the active site.

This sequence belongs to the HisA/HisF family.

Its subcellular location is the cytoplasm. It catalyses the reaction 1-(5-phospho-beta-D-ribosyl)-5-[(5-phospho-beta-D-ribosylamino)methylideneamino]imidazole-4-carboxamide = 5-[(5-phospho-1-deoxy-D-ribulos-1-ylimino)methylamino]-1-(5-phospho-beta-D-ribosyl)imidazole-4-carboxamide. It participates in amino-acid biosynthesis; L-histidine biosynthesis; L-histidine from 5-phospho-alpha-D-ribose 1-diphosphate: step 4/9. The protein is 1-(5-phosphoribosyl)-5-[(5-phosphoribosylamino)methylideneamino] imidazole-4-carboxamide isomerase of Prochlorococcus marinus (strain MIT 9515).